Consider the following 292-residue polypeptide: Release factor glutamine methyltransferase (292 aa).

S-adenosyl-L-methionine contacts are provided by residues 126–130, D157, W184, and N198; that span reads GTGTG. 198–201 is a substrate binding site; it reads NPPY.

It belongs to the protein N5-glutamine methyltransferase family. PrmC subfamily.

It catalyses the reaction L-glutaminyl-[peptide chain release factor] + S-adenosyl-L-methionine = N(5)-methyl-L-glutaminyl-[peptide chain release factor] + S-adenosyl-L-homocysteine + H(+). Its function is as follows. Methylates the class 1 translation termination release factors RF1/PrfA and RF2/PrfB on the glutamine residue of the universally conserved GGQ motif. The protein is Release factor glutamine methyltransferase of Haemophilus influenzae (strain ATCC 51907 / DSM 11121 / KW20 / Rd).